Reading from the N-terminus, the 376-residue chain is Thiol-disulfide oxidoreductase LTO1 (376 aa).

A chloroplast-targeting transit peptide spans 1 to 45; it reads MMARFVSVSSCQFHFGFREVSPPSVTSYPRRFEVSDRRFPAIPIK. The disordered stretch occupies residues 44–77; it reads IKCSSSEPENGEDSAPSLSSSSSSSTSEVSTSNS. The Stromal portion of the chain corresponds to 46–81; sequence CSSSEPENGEDSAPSLSSSSSSSTSEVSTSNSSTYN. Residues 57-77 are compositionally biased toward low complexity; it reads SAPSLSSSSSSSTSEVSTSNS. A helical membrane pass occupies residues 82-102; the sequence is WYTGIGGIGMLDTAYLTYLKV. Topologically, residues 103–125 are lumenal; sequence TGSDAFCPIGGGTCGDVLNSDYA. Cysteines 109 and 116 form a disulfide. Residues 126-146 form a helical membrane-spanning segment; that stretch reads VVFGVPLPVIGFVMYGVVTAL. The Stromal segment spans residues 147-165; sequence SAELGEGNLPFGISKSNGR. Residues 166–186 traverse the membrane as a helical segment; that stretch reads FALFGITTAMASASAYFLYIL. Topologically, residues 187–192 are lumenal; it reads STKLSG. Residues 193–213 traverse the membrane as a helical segment; it reads SSCLYCLVSAFLSFSLFFLSV. Cys195 and Cys198 are joined by a disulfide. Over 214 to 223 the chain is Stromal; the sequence is KDVKLQEIQQ. A helical membrane pass occupies residues 224–244; it reads VVGLQICLAIIVVASLTASYS. Residues 245–376 are Lumenal-facing; it reads TAQPIPSRSG…DQANETNQLQ (132 aa). 2 disulfide bridges follow: Cys293/Cys296 and Cys316/Cys331.

The protein belongs to the VKOR family. In terms of assembly, interacts with the PSII subunits PSBO1 and PSBO2. Interacts with TL17, TL20.3, HCF164, PETJ, VDE1, EDA3, FKBP13 and FKBP20-2. Expressed in cotyledons, rosette leaves, stems, cauline leaves and flowers.

Its subcellular location is the plastid. The protein resides in the chloroplast thylakoid membrane. In terms of biological role, thiol-disulfide oxidoreductase catalyzing disulfide bond formation of chloroplast proteins and involved in redox regulation and photosynthetic electron transport. Required for the assembly of photosystem II (PSII) through the formation of disulfide bond in PSBO, a subunit of the PSII oxygen-evolving complex in the thylakoid lumen. Involved in the formation of disulfide bonds in the lumenal protein FKBP13. In vitro, reduces phylloquinone (vitamin K1) and menaquinone (vitamin K2) to their respective quinol. Cannot reduce phylloquinone epoxide to phylloquinone. Plays an important role in regulating the thylakoid lumen redox. This is Thiol-disulfide oxidoreductase LTO1 from Arabidopsis thaliana (Mouse-ear cress).